Consider the following 354-residue polypeptide: Methylthioribose-1-phosphate isomerase (354 aa).

Substrate-binding positions include 58–60, Arg-101, and Gln-204; that span reads RGA. Asp-245 acts as the Proton donor in catalysis. A substrate-binding site is contributed by 255–256; it reads NK.

It belongs to the eIF-2B alpha/beta/delta subunits family. MtnA subfamily.

The enzyme catalyses 5-(methylsulfanyl)-alpha-D-ribose 1-phosphate = 5-(methylsulfanyl)-D-ribulose 1-phosphate. The protein operates within amino-acid biosynthesis; L-methionine biosynthesis via salvage pathway; L-methionine from S-methyl-5-thio-alpha-D-ribose 1-phosphate: step 1/6. Its function is as follows. Catalyzes the interconversion of methylthioribose-1-phosphate (MTR-1-P) into methylthioribulose-1-phosphate (MTRu-1-P). The polypeptide is Methylthioribose-1-phosphate isomerase (Xylella fastidiosa (strain M12)).